We begin with the raw amino-acid sequence, 88 residues long: Small ribosomal subunit protein bS20 (88 aa).

This sequence belongs to the bacterial ribosomal protein bS20 family.

Binds directly to 16S ribosomal RNA. The chain is Small ribosomal subunit protein bS20 from Bartonella henselae (strain ATCC 49882 / DSM 28221 / CCUG 30454 / Houston 1) (Rochalimaea henselae).